Reading from the N-terminus, the 261-residue chain is Cytochrome c oxidase subunit 3 (261 aa).

Residues 1–15 are Mitochondrial matrix-facing; the sequence is MTHQTHAYHMVNPSP. The helical transmembrane segment at 16–34 threads the bilayer; it reads WPLTGALSALLMTSGLAMW. Residues 35–40 are Mitochondrial intermembrane-facing; the sequence is FHYNSM. The helical transmembrane segment at 41–66 threads the bilayer; that stretch reads LLLTLGLMTNLLTMYQWWRDIVREST. The Mitochondrial matrix portion of the chain corresponds to 67 to 72; sequence FQGHHT. The chain crosses the membrane as a helical span at residues 73 to 105; that stretch reads LVVQKGLRYGMILFIISEVFFFSGFFWAFYHSS. Topologically, residues 106-128 are mitochondrial intermembrane; that stretch reads LAPTPELGGCWPPTGIHPLNPME. A helical transmembrane segment spans residues 129–152; it reads VPLLNTSVLLASGVSITWAHHSLM. At 153–155 the chain is on the mitochondrial matrix side; it reads EGN. A helical transmembrane segment spans residues 156 to 183; the sequence is RKHMLQALFITISLGVYFTLLQASEYYE. The Mitochondrial intermembrane portion of the chain corresponds to 184 to 190; that stretch reads APFTISD. A helical transmembrane segment spans residues 191-223; it reads GIYGSTFFVATGFHGLHVIIGSTFLIVCFLRQL. The Mitochondrial matrix portion of the chain corresponds to 224 to 232; sequence KFHFTSNHH. Residues 233–256 traverse the membrane as a helical segment; that stretch reads FGFEAAAWYWHFVDVVWLFLYVSI. The Mitochondrial intermembrane portion of the chain corresponds to 257-261; that stretch reads YWWGS.

It belongs to the cytochrome c oxidase subunit 3 family. In terms of assembly, component of the cytochrome c oxidase (complex IV, CIV), a multisubunit enzyme composed of 14 subunits. The complex is composed of a catalytic core of 3 subunits MT-CO1, MT-CO2 and MT-CO3, encoded in the mitochondrial DNA, and 11 supernumerary subunits COX4I, COX5A, COX5B, COX6A, COX6B, COX6C, COX7A, COX7B, COX7C, COX8 and NDUFA4, which are encoded in the nuclear genome. The complex exists as a monomer or a dimer and forms supercomplexes (SCs) in the inner mitochondrial membrane with NADH-ubiquinone oxidoreductase (complex I, CI) and ubiquinol-cytochrome c oxidoreductase (cytochrome b-c1 complex, complex III, CIII), resulting in different assemblies (supercomplex SCI(1)III(2)IV(1) and megacomplex MCI(2)III(2)IV(2)).

The protein localises to the mitochondrion inner membrane. The enzyme catalyses 4 Fe(II)-[cytochrome c] + O2 + 8 H(+)(in) = 4 Fe(III)-[cytochrome c] + 2 H2O + 4 H(+)(out). Component of the cytochrome c oxidase, the last enzyme in the mitochondrial electron transport chain which drives oxidative phosphorylation. The respiratory chain contains 3 multisubunit complexes succinate dehydrogenase (complex II, CII), ubiquinol-cytochrome c oxidoreductase (cytochrome b-c1 complex, complex III, CIII) and cytochrome c oxidase (complex IV, CIV), that cooperate to transfer electrons derived from NADH and succinate to molecular oxygen, creating an electrochemical gradient over the inner membrane that drives transmembrane transport and the ATP synthase. Cytochrome c oxidase is the component of the respiratory chain that catalyzes the reduction of oxygen to water. Electrons originating from reduced cytochrome c in the intermembrane space (IMS) are transferred via the dinuclear copper A center (CU(A)) of subunit 2 and heme A of subunit 1 to the active site in subunit 1, a binuclear center (BNC) formed by heme A3 and copper B (CU(B)). The BNC reduces molecular oxygen to 2 water molecules using 4 electrons from cytochrome c in the IMS and 4 protons from the mitochondrial matrix. This is Cytochrome c oxidase subunit 3 (MT-CO3) from Ceratotherium simum (White rhinoceros).